The following is a 413-amino-acid chain: 1-deoxy-D-xylulose 5-phosphate reductoisomerase (413 aa).

Positions 13, 14, 15, 16, 40, 41, and 127 each coordinate NADPH. K128 is a binding site for 1-deoxy-D-xylulose 5-phosphate. Residue E129 coordinates NADPH. A Mn(2+)-binding site is contributed by D153. 4 residues coordinate 1-deoxy-D-xylulose 5-phosphate: S154, E155, S184, and H207. E155 serves as a coordination point for Mn(2+). Position 213 (G213) interacts with NADPH. 1-deoxy-D-xylulose 5-phosphate is bound by residues S220, N225, K226, and E229. E229 serves as a coordination point for Mn(2+).

It belongs to the DXR family. The cofactor is Mg(2+). Mn(2+) serves as cofactor.

The catalysed reaction is 2-C-methyl-D-erythritol 4-phosphate + NADP(+) = 1-deoxy-D-xylulose 5-phosphate + NADPH + H(+). Its pathway is isoprenoid biosynthesis; isopentenyl diphosphate biosynthesis via DXP pathway; isopentenyl diphosphate from 1-deoxy-D-xylulose 5-phosphate: step 1/6. In terms of biological role, catalyzes the NADPH-dependent rearrangement and reduction of 1-deoxy-D-xylulose-5-phosphate (DXP) to 2-C-methyl-D-erythritol 4-phosphate (MEP). The polypeptide is 1-deoxy-D-xylulose 5-phosphate reductoisomerase (Nitrosomonas eutropha (strain DSM 101675 / C91 / Nm57)).